The chain runs to 126 residues: Protein ApaG (126 aa).

Residues 2 to 126 (SDPRYQIDVS…FRLAVPGALH (125 aa)) form the ApaG domain.

The chain is Protein ApaG from Pseudomonas fluorescens (strain SBW25).